The chain runs to 162 residues: Probable chemoreceptor glutamine deamidase CheD (162 aa).

The protein belongs to the CheD family.

The catalysed reaction is L-glutaminyl-[protein] + H2O = L-glutamyl-[protein] + NH4(+). Its function is as follows. Probably deamidates glutamine residues to glutamate on methyl-accepting chemotaxis receptors (MCPs), playing an important role in chemotaxis. In Clostridium botulinum (strain Eklund 17B / Type B), this protein is Probable chemoreceptor glutamine deamidase CheD.